Here is a 134-residue protein sequence, read N- to C-terminus: Profilin-2 (134 aa).

A disulfide bridge links C13 with C118. The Involved in PIP2 interaction signature appears at 84–100; sequence AVIRGKKGSGGITIKKT. A Phosphothreonine modification is found at T114.

The protein belongs to the profilin family. As to quaternary structure, occurs in many kinds of cells as a complex with monomeric actin in a 1:1 ratio. Phosphorylated by MAP kinases.

It is found in the cytoplasm. Its subcellular location is the cytoskeleton. Functionally, binds to actin and affects the structure of the cytoskeleton. At high concentrations, profilin prevents the polymerization of actin, whereas it enhances it at low concentrations. The chain is Profilin-2 from Olea europaea (Common olive).